A 44-amino-acid chain; its full sequence is Large ribosomal subunit protein P2 (44 aa).

Met1 is modified (N-acetylmethionine). A phosphoserine mark is found at Ser17 and Ser19. Position 21 is an N6-acetyllysine; alternate (Lys21). Lys21 carries the post-translational modification N6-succinyllysine; alternate.

It belongs to the eukaryotic ribosomal protein P1/P2 family. In terms of assembly, heterodimer with RPLP1 at the lateral ribosomal stalk of the large ribosomal subunit. Post-translationally, phosphorylated.

Plays an important role in the elongation step of protein synthesis. This Oryctolagus cuniculus (Rabbit) protein is Large ribosomal subunit protein P2 (RPLP2).